The primary structure comprises 581 residues: Terpene synthase 2, chloroplastic (581 aa).

The N-terminal 34 residues, Met-1 to Ala-34, are a transit peptide targeting the chloroplast. Substrate is bound by residues Arg-299, Asp-336, Asp-340, and Arg-480. Residues Asp-336 and Asp-340 each coordinate Mg(2+). The DDXXD motif motif lies at Asp-336–Asp-340. Mg(2+) is bound by residues Asp-483, Ser-487, and Glu-491.

It belongs to the terpene synthase family. Monomer. Mg(2+) is required as a cofactor.

Its subcellular location is the plastid. It is found in the chloroplast. It catalyses the reaction (2E,6E)-farnesyl diphosphate + H2O = (3S,6E)-nerolidol + diphosphate. The enzyme catalyses (2E,6E,10E)-geranylgeranyl diphosphate + H2O = (6E,10E)-geranyllinalool + diphosphate. It carries out the reaction (2E)-geranyl diphosphate + H2O = (S)-linalool + diphosphate. It functions in the pathway secondary metabolite biosynthesis; terpenoid biosynthesis. Functionally, involved in sesquiterpene (C15), diterpene (C20) and monoterpene (C10) biosynthesis. Has sesquiterpene synthase activity, converting farnesyl diphosphate to nerolidol, the precursor of the volatile C11-homoterpene (E)-3,8-dimethyl-1,4,7-nonatriene (DMNT). Has diterpene synthase activity, converting geranylgeranyl diphosphate to (E,E)-geranyllinalool, the precursor of the volatile C16-homoterpene (E,E)-4,8,12-trimethyltrideca 1,3,7,11-tetraene (TMTT). Has monoterpene synthase activity, converting geranyl diphosphate into linalool. Forms only the S-isomers of the three tertiary terpene alcohols. The chain is Terpene synthase 2, chloroplastic from Zea mays (Maize).